A 188-amino-acid polypeptide reads, in one-letter code: Meiotically up-regulated gene 94 protein (188 aa).

Its subcellular location is the cytoplasm. The protein localises to the nucleus. Has a role in meiosis. The chain is Meiotically up-regulated gene 94 protein (mug94) from Schizosaccharomyces pombe (strain 972 / ATCC 24843) (Fission yeast).